Consider the following 258-residue polypeptide: MLAKRIIPCLDVRDGQVVKGVQFRNHEIIGDIVPLAKRYAEEGADELVFYDITASSDGRVVDKSWVSRVAEVIDIPFCVAGGIKSLEDAAKILSFGADKISINSPALADPTLITRLADRFGVQCIVVGIDTWYDAETGKYHVNQYTGDESRTRVTQWETLDWVQEVQKRGAGEIVLNMMNQDGVRNGYDLEQLKKVREVCHIPLIASGGAGTMEHFLEAFRDADVDGALAASVFHKQIINIGELKAYLATQGVEIRIC.

Residues D11 and D130 contribute to the active site.

The protein belongs to the HisA/HisF family. In terms of assembly, heterodimer of HisH and HisF.

The protein resides in the cytoplasm. The enzyme catalyses 5-[(5-phospho-1-deoxy-D-ribulos-1-ylimino)methylamino]-1-(5-phospho-beta-D-ribosyl)imidazole-4-carboxamide + L-glutamine = D-erythro-1-(imidazol-4-yl)glycerol 3-phosphate + 5-amino-1-(5-phospho-beta-D-ribosyl)imidazole-4-carboxamide + L-glutamate + H(+). It functions in the pathway amino-acid biosynthesis; L-histidine biosynthesis; L-histidine from 5-phospho-alpha-D-ribose 1-diphosphate: step 5/9. Functionally, IGPS catalyzes the conversion of PRFAR and glutamine to IGP, AICAR and glutamate. The HisF subunit catalyzes the cyclization activity that produces IGP and AICAR from PRFAR using the ammonia provided by the HisH subunit. This chain is Imidazole glycerol phosphate synthase subunit HisF, found in Shigella dysenteriae serotype 1 (strain Sd197).